A 221-amino-acid polypeptide reads, in one-letter code: Phosphoribosylformylglycinamidine synthase subunit PurQ (221 aa).

The region spanning 2–221 (KTAVIQFPGS…VFESLKTVKK (220 aa)) is the Glutamine amidotransferase type-1 domain. Cys-87 acts as the Nucleophile in catalysis. Residues His-195 and Glu-197 contribute to the active site.

Part of the FGAM synthase complex composed of 1 PurL, 1 PurQ and 2 PurS subunits.

The protein localises to the cytoplasm. It catalyses the reaction N(2)-formyl-N(1)-(5-phospho-beta-D-ribosyl)glycinamide + L-glutamine + ATP + H2O = 2-formamido-N(1)-(5-O-phospho-beta-D-ribosyl)acetamidine + L-glutamate + ADP + phosphate + H(+). The catalysed reaction is L-glutamine + H2O = L-glutamate + NH4(+). It functions in the pathway purine metabolism; IMP biosynthesis via de novo pathway; 5-amino-1-(5-phospho-D-ribosyl)imidazole from N(2)-formyl-N(1)-(5-phospho-D-ribosyl)glycinamide: step 1/2. Functionally, part of the phosphoribosylformylglycinamidine synthase complex involved in the purines biosynthetic pathway. Catalyzes the ATP-dependent conversion of formylglycinamide ribonucleotide (FGAR) and glutamine to yield formylglycinamidine ribonucleotide (FGAM) and glutamate. The FGAM synthase complex is composed of three subunits. PurQ produces an ammonia molecule by converting glutamine to glutamate. PurL transfers the ammonia molecule to FGAR to form FGAM in an ATP-dependent manner. PurS interacts with PurQ and PurL and is thought to assist in the transfer of the ammonia molecule from PurQ to PurL. This is Phosphoribosylformylglycinamidine synthase subunit PurQ from Deinococcus radiodurans (strain ATCC 13939 / DSM 20539 / JCM 16871 / CCUG 27074 / LMG 4051 / NBRC 15346 / NCIMB 9279 / VKM B-1422 / R1).